Consider the following 323-residue polypeptide: Transcription factor MYB56 (323 aa).

The span at 1–14 (MNPNLLEKDLRGKE) shows a compositional bias: basic and acidic residues. The tract at residues 1 to 84 (MNPNLLEKDL…EKSLRMRGKS (84 aa)) is disordered. Polar residues predominate over residues 27-60 (NFRSLPNSHTAACKTSLNNPSISRNHPHNKSASV). Positions 66 to 78 (EHGNERGENEKSL) are enriched in basic and acidic residues. HTH myb-type domains follow at residues 88–139 (TKVC…FNQL) and 140–194 (DPRI…ARRT). 2 consecutive DNA-binding regions (H-T-H motif) follow at residues 116–138 (WNLI…WFNQ) and 167–190 (WALI…HVIM). The interval 192-217 (RRTRESQRQRQQPPPTLSRDAEMTVS) is disordered.

In terms of assembly, forms homodimer. Interacts with the dephosphorylated active form of BES1 in the nucleus of quiescent center (QC) cells. Interacts with BPM1, BPM2, BPM3, BPM4, BPM5 and BPM6 at the promoter of FLOWERING LOCUS T (FT). As to expression, mostly expressed in flowers (at protein level) and siliques, and, to a lower extent, in roots, stems and leaves. Expressed in embryos (e.g. heart and torpedo stages) and cotyledons, and, at low levels, in roots and inflorescence. Accumulates specifically in root apical meristem quiescent center (QC) and vascular initial cells.

Its subcellular location is the nucleus. The protein resides in the cytoplasm. It is found in the cytosol. Acts as a cell-specific local repressor of quiescent center (QC) self-renewal by cell divisions in the primary root. Counteracts brassinosteroid (BR)-mediated cell division in the QC cells. Regulates maternally seed size, especially before the heart stage, promoting both endothelial cells expansion and cell number in the outer integument layer of the seed coat. Modulates the expression of genes involved in cell wall metabolism such as cell division and expansion. Negative regulator of flowering via the repression of FT transcription. The protein is Transcription factor MYB56 of Arabidopsis thaliana (Mouse-ear cress).